The primary structure comprises 259 residues: tRNA pseudouridine synthase A (259 aa).

D52 serves as the catalytic Nucleophile. Y111 is a binding site for substrate.

This sequence belongs to the tRNA pseudouridine synthase TruA family. In terms of assembly, homodimer.

The catalysed reaction is uridine(38/39/40) in tRNA = pseudouridine(38/39/40) in tRNA. Functionally, formation of pseudouridine at positions 38, 39 and 40 in the anticodon stem and loop of transfer RNAs. The polypeptide is tRNA pseudouridine synthase A (Ruegeria sp. (strain TM1040) (Silicibacter sp.)).